The sequence spans 277 residues: Undecaprenyl-diphosphatase (277 aa).

7 helical membrane-spanning segments follow: residues 5-25 (WTAA…FLPI), 44-64 (RAMA…VWEF), 86-106 (LNLL…ADTI), 110-130 (LFNA…MLWA), 184-204 (AATE…AVYS), 219-239 (VFAI…RALL), and 255-275 (IAFG…WASA).

The protein belongs to the UppP family.

The protein localises to the cell inner membrane. The enzyme catalyses di-trans,octa-cis-undecaprenyl diphosphate + H2O = di-trans,octa-cis-undecaprenyl phosphate + phosphate + H(+). Functionally, catalyzes the dephosphorylation of undecaprenyl diphosphate (UPP). Confers resistance to bacitracin. The polypeptide is Undecaprenyl-diphosphatase (Pseudomonas savastanoi pv. phaseolicola (strain 1448A / Race 6) (Pseudomonas syringae pv. phaseolicola (strain 1448A / Race 6))).